The following is a 308-amino-acid chain: MGYLLTIACYIASFSPSIALFCSFIAHDPVRIILFFLGSFFWLVSLLFSSLAWLGLSTVLPDTFLLSLTVCIIAQELSRVAYFMLLKKAQRGLNKITRQGQISVAPGVSDLHNARHMLALVCGLGMGVISALFYTMNAFAIFSGPGTIGLPNALKTGEIDTNRAGKYLPLCYTLSAILLTLFHVTWTIMVWDSCHKIGRIPSAFVPGAAAVVSHLLVTFLSSLNSRGFHVLVFAVQFLILLICIAYCNVIMGGTISSFVNGIGQSITDAVTLKQVRTLIEERKLRTQRQSVPDEPMTERAGTSNTVNA.

A run of 7 helical transmembrane segments spans residues 5-25 (LTIACYIASFSPSIALFCSFI), 32-52 (IILFFLGSFFWLVSLLFSSLA), 53-73 (WLGLSTVLPDTFLLSLTVCII), 122-142 (CGLGMGVISALFYTMNAFAIF), 170-190 (LCYTLSAILLTLFHVTWTIMV), 200-220 (IPSAFVPGAAAVVSHLLVTFL), and 230-250 (VLVFAVQFLILLICIAYCNVI). The segment at 286–308 (TQRQSVPDEPMTERAGTSNTVNA) is disordered.

The protein belongs to the APH-1 family. As to quaternary structure, component of the gamma-secretase complex, a complex probably composed of the presenilin homodimer (sel-12, hop-1 or spe-4), nicastrin (aph-2), aph-1 and pen-2.

The protein resides in the membrane. Its function is as follows. Essential subunit of the gamma-secretase complex, an endoprotease complex that catalyzes the intramembrane cleavage of integral proteins such as Notch receptors (lin-12 or glp-1). It may represent a stabilizing cofactor for the presenilin homodimer that promotes the formation of a stable complex. Required for the localization of aph-2. The protein is Gamma-secretase subunit aph-1 (aph-1) of Caenorhabditis elegans.